Consider the following 492-residue polypeptide: Bifunctional purine biosynthesis protein PurH (492 aa).

One can recognise an MGS-like domain in the interval 1-144 (MKKAILSVSN…KNYKHVTTIV (144 aa)).

The protein belongs to the PurH family.

It catalyses the reaction (6R)-10-formyltetrahydrofolate + 5-amino-1-(5-phospho-beta-D-ribosyl)imidazole-4-carboxamide = 5-formamido-1-(5-phospho-D-ribosyl)imidazole-4-carboxamide + (6S)-5,6,7,8-tetrahydrofolate. The catalysed reaction is IMP + H2O = 5-formamido-1-(5-phospho-D-ribosyl)imidazole-4-carboxamide. The protein operates within purine metabolism; IMP biosynthesis via de novo pathway; 5-formamido-1-(5-phospho-D-ribosyl)imidazole-4-carboxamide from 5-amino-1-(5-phospho-D-ribosyl)imidazole-4-carboxamide (10-formyl THF route): step 1/1. It participates in purine metabolism; IMP biosynthesis via de novo pathway; IMP from 5-formamido-1-(5-phospho-D-ribosyl)imidazole-4-carboxamide: step 1/1. This chain is Bifunctional purine biosynthesis protein PurH, found in Staphylococcus aureus (strain MSSA476).